A 688-amino-acid chain; its full sequence is Glycine--tRNA ligase beta subunit (688 aa).

The protein belongs to the class-II aminoacyl-tRNA synthetase family. In terms of assembly, tetramer of two alpha and two beta subunits.

Its subcellular location is the cytoplasm. The enzyme catalyses tRNA(Gly) + glycine + ATP = glycyl-tRNA(Gly) + AMP + diphosphate. This is Glycine--tRNA ligase beta subunit from Actinobacillus pleuropneumoniae serotype 7 (strain AP76).